A 221-amino-acid chain; its full sequence is Cytidylate kinase 1 (221 aa).

7-15 (GPSASGKSS) lines the ATP pocket.

The protein belongs to the cytidylate kinase family. Type 1 subfamily.

Its subcellular location is the cytoplasm. It catalyses the reaction CMP + ATP = CDP + ADP. The enzyme catalyses dCMP + ATP = dCDP + ADP. This chain is Cytidylate kinase 1, found in Borreliella afzelii (strain PKo) (Borrelia afzelii).